Here is a 374-residue protein sequence, read N- to C-terminus: RNA polymerase sigma factor SigA (374 aa).

The tract at residues 141–211 (LAEANLRLVV…TRAIADQART (71 aa)) is sigma-70 factor domain-2. Residues 165–168 (DLIQ) carry the Interaction with polymerase core subunit RpoC motif. A sigma-70 factor domain-3 region spans residues 220–296 (ETINKLIRVQ…DQDATSPSDH (77 aa)). The sigma-70 factor domain-4 stretch occupies residues 309-362 (VLDTLTDREENVLRLRFGLDDGRTRTLEEVGRVFGVTRERIRQIEAKALRKLRH). The segment at residues 335–354 (LEEVGRVFGVTRERIRQIEA) is a DNA-binding region (H-T-H motif).

This sequence belongs to the sigma-70 factor family. RpoD/SigA subfamily. As to quaternary structure, interacts transiently with the RNA polymerase catalytic core.

It is found in the cytoplasm. Its function is as follows. Sigma factors are initiation factors that promote the attachment of RNA polymerase to specific initiation sites and are then released. This sigma factor is the primary sigma factor during exponential growth. This Listeria monocytogenes serovar 1/2a (strain ATCC BAA-679 / EGD-e) protein is RNA polymerase sigma factor SigA.